The chain runs to 279 residues: 2-dehydro-3-deoxyphosphooctonate aldolase (279 aa).

The protein belongs to the KdsA family.

Its subcellular location is the cytoplasm. The catalysed reaction is D-arabinose 5-phosphate + phosphoenolpyruvate + H2O = 3-deoxy-alpha-D-manno-2-octulosonate-8-phosphate + phosphate. The protein operates within carbohydrate biosynthesis; 3-deoxy-D-manno-octulosonate biosynthesis; 3-deoxy-D-manno-octulosonate from D-ribulose 5-phosphate: step 2/3. It functions in the pathway bacterial outer membrane biogenesis; lipopolysaccharide biosynthesis. The polypeptide is 2-dehydro-3-deoxyphosphooctonate aldolase (Methylobacillus flagellatus (strain ATCC 51484 / DSM 6875 / VKM B-1610 / KT)).